A 212-amino-acid chain; its full sequence is uncharacterized protein (212 aa).

This is an uncharacterized protein from Mycobacterium tuberculosis (strain ATCC 25618 / H37Rv).